We begin with the raw amino-acid sequence, 168 residues long: S-ribosylhomocysteine lyase (168 aa).

Fe cation is bound by residues His-54, His-58, and Cys-128.

The protein belongs to the LuxS family. As to quaternary structure, homodimer. It depends on Fe cation as a cofactor.

The enzyme catalyses S-(5-deoxy-D-ribos-5-yl)-L-homocysteine = (S)-4,5-dihydroxypentane-2,3-dione + L-homocysteine. In terms of biological role, involved in the synthesis of autoinducer 2 (AI-2) which is secreted by bacteria and is used to communicate both the cell density and the metabolic potential of the environment. The regulation of gene expression in response to changes in cell density is called quorum sensing. Catalyzes the transformation of S-ribosylhomocysteine (RHC) to homocysteine (HC) and 4,5-dihydroxy-2,3-pentadione (DPD). The polypeptide is S-ribosylhomocysteine lyase (Neisseria meningitidis serogroup A / serotype 4A (strain DSM 15465 / Z2491)).